Reading from the N-terminus, the 263-residue chain is Acidic leucine-rich nuclear phosphoprotein 32 family member A (263 aa).

LRR repeat units lie at residues 16-37 (QIQELNLDNCRSTSIVGLTDEY), 39-60 (ALESLSLINVGLTTLKGFPKLP), 61-83 (NLKKLELSDNRISSGLNYLTTSP), and 84-105 (KLQYLNLSGNKIKDLETLKPLE). The 39-residue stretch at 118 to 156 (NDATQVDNYREKIFKMLPSLNFLDGFDCNDEEAQSEGDD) folds into the LRRCT domain. Composition is skewed to acidic residues over residues 144-189 (DCND…DGDN) and 198-232 (YNDDLEEDNSDWEEGEGGGDDDEEDSDIDDADGEA). A disordered region spans residues 144-263 (DCNDEEAQSE…ARGKKRKHDG (120 aa)). The segment covering 242 to 254 (SKKEPEKTDESQA) has biased composition (basic and acidic residues).

This sequence belongs to the ANP32 family. Phosphorylated on serine residues.

It localises to the nucleus. The protein resides in the cytoplasm. Implicated in a number of cellular processes, including proliferation, differentiation, caspase-dependent and caspase-independent apoptosis, suppression of transformation (tumor suppressor), inhibition of protein phosphatase 2A, regulation of mRNA trafficking and stability, and inhibition of acetyltransferases as part of the INHAT (inhibitor of histone acetyltransferases) complex. This Drosophila pseudoobscura pseudoobscura (Fruit fly) protein is Acidic leucine-rich nuclear phosphoprotein 32 family member A (Anp32a).